Reading from the N-terminus, the 365-residue chain is Class I histocompatibility antigen, Gogo-A*0101 alpha chain (365 aa).

The first 24 residues, 1–24 (MAVMAPRTLVLLLSGALALTQTWA), serve as a signal peptide directing secretion. The interval 25 to 114 (GSHSMRYFST…LRGYYNQSED (90 aa)) is alpha-1. The Extracellular portion of the chain corresponds to 25–308 (GSHSMRYFST…EPSSQPTIPI (284 aa)). The N-linked (GlcNAc...) asparagine glycan is linked to Asn110. The interval 115-206 (GSHTIQRMYG…ENGKETLQRT (92 aa)) is alpha-2. 2 disulfide bridges follow: Cys125/Cys188 and Cys227/Cys283. An alpha-3 region spans residues 207-298 (DAPKTHMTHH…GLPEPLTLRW (92 aa)). The region spanning 209–297 (PKTHMTHHAV…EGLPEPLTLR (89 aa)) is the Ig-like C1-type domain. A connecting peptide region spans residues 299-308 (EPSSQPTIPI). The chain crosses the membrane as a helical span at residues 309–332 (VGIIAGLVLFGAVIAGAVVAAVRW). The Cytoplasmic portion of the chain corresponds to 333–365 (RRKSSDRKGGSYSQAASSDSAQGSDVSLTACKV). A disordered region spans residues 338–365 (DRKGGSYSQAASSDSAQGSDVSLTACKV). A compositionally biased stretch (low complexity) spans 342–359 (GSYSQAASSDSAQGSDVS). Ser343 is modified (phosphoserine). At Tyr344 the chain carries Phosphotyrosine. Phosphoserine occurs at positions 345, 349, 350, 352, 356, and 359.

This sequence belongs to the MHC class I family. Heterodimer of an alpha chain and a beta chain (beta-2-microglobulin).

It localises to the membrane. In terms of biological role, involved in the presentation of foreign antigens to the immune system. In Gorilla gorilla gorilla (Western lowland gorilla), this protein is Class I histocompatibility antigen, Gogo-A*0101 alpha chain.